The chain runs to 527 residues: MYPYCLKYLTNGLRSKQMINFLCIQNILSARTLKICRFRFLPTPSHPTHKMAQETRAISSISEAANKRARKLSKRRAKKPVEEGSSGHVLLLEIENLIEKPVLANVPFERFQEIEVKISYLSSSGDGIGLVCNDQYAVVVPFTLPGDIVKAKLHFLADTYALADFLEVISPSEDRDDTLIKCPYFAKCGGCQYQMLSYDKQLLQKKRVVEKAFQYYSKLDSSLLPAIKDTVGSPLQYNYRTKITPHFDVPKGGTKGPLIIGFQEKGRRRVMDIEECPIATKTINEEYPKIIEDVQSRANTFKRGATILMRDSATEDGKHCVITDHKMIVREQFGDLSFTFPAGAFFQNNNSILEKFTSYVREQLLNPFGRKEHQRPKYFVDAYCGSGLFSVACSKGFLSVIGVEISADSVRYAEENAKRNNVSNATFIVGQAEKIFSSIETPPNETAMVIDPPRKGCDQSFLNQLLEYSPYRIVYISCNVHTQARDVGFLLSQEKGRSYKIDEIRGFDLFPQSHHVESILTLTKVVS.

The TRAM domain maps to 107–167 (PFERFQEIEV…DTYALADFLE (61 aa)). [4Fe-4S] cluster contacts are provided by Cys182, Cys188, Cys191, and Cys276. 4 residues coordinate S-adenosyl-L-methionine: Gln347, Tyr383, Glu404, and Asp451. Cys478 functions as the Nucleophile in the catalytic mechanism. The Proton acceptor role is filled by Glu517.

Belongs to the class I-like SAM-binding methyltransferase superfamily. RNA M5U methyltransferase family.

It catalyses the reaction uridine(54) in tRNA + S-adenosyl-L-methionine = 5-methyluridine(54) in tRNA + S-adenosyl-L-homocysteine + H(+). Functionally, catalyzes the formation of 5-methyl-uridine at position 54 (m5U54) in all tRNA. May also have a role in tRNA stabilization or maturation. The chain is tRNA (uracil(54)-C(5))-methyltransferase from Schizosaccharomyces pombe (strain 972 / ATCC 24843) (Fission yeast).